Here is a 346-residue protein sequence, read N- to C-terminus: Biotin synthase (346 aa).

Residues 38 to 256 (RQVQVSTLLS…IAVARIMMPT (219 aa)) form the Radical SAM core domain. The [4Fe-4S] cluster site is built by C53, C57, and C60. [2Fe-2S] cluster-binding residues include C97, C128, C188, and R260.

This sequence belongs to the radical SAM superfamily. Biotin synthase family. In terms of assembly, homodimer. It depends on [4Fe-4S] cluster as a cofactor. [2Fe-2S] cluster is required as a cofactor.

The enzyme catalyses (4R,5S)-dethiobiotin + (sulfur carrier)-SH + 2 reduced [2Fe-2S]-[ferredoxin] + 2 S-adenosyl-L-methionine = (sulfur carrier)-H + biotin + 2 5'-deoxyadenosine + 2 L-methionine + 2 oxidized [2Fe-2S]-[ferredoxin]. It participates in cofactor biosynthesis; biotin biosynthesis; biotin from 7,8-diaminononanoate: step 2/2. Catalyzes the conversion of dethiobiotin (DTB) to biotin by the insertion of a sulfur atom into dethiobiotin via a radical-based mechanism. This Escherichia coli O6:H1 (strain CFT073 / ATCC 700928 / UPEC) protein is Biotin synthase.